Consider the following 684-residue polypeptide: Beta-taxilin (684 aa).

The span at 1–26 shows a compositional bias: polar residues; that stretch reads MEANHSEQLSAERQSTPPGDSSSLPS. Residues 1–132 are disordered; that stretch reads MEANHSEQLS…KEPVSNKEQK (132 aa). Over residues 45–64 the composition is skewed to basic and acidic residues; it reads PEKEASVHPDISEELNRQLE. The segment covering 93 to 107 has biased composition (acidic residues); the sequence is ESPDNEDGDCEETTE. 2 coiled-coil regions span residues 135–351 and 378–467; these read KKIL…VLKE and NEVF…SEKD. A compositionally biased stretch (basic and acidic residues) spans 458–475; that stretch reads IRDAEISEKDDQSQHNSD. Disordered stretches follow at residues 458–485, 514–632, and 646–684; these read IRDAEISEKDDQSQHNSDEEPESNVSVD, ESTP…DVPA, and PACEPSRQPPRAAAEELPVGASAGPQPRNVADTNLEGVD. Phosphoserine occurs at positions 474 and 483. The segment covering 514–524 has biased composition (basic and acidic residues); sequence ESTPHQSKETQ. Over residues 613 to 622 the composition is skewed to polar residues; sequence QAPQAPTEAS.

The protein belongs to the taxilin family. Binds to the C-terminal coiled coil region of syntaxin family members STX1A, STX3A and STX4A. Has a preference for STX1A. Expressed in skeletal muscle.

Functionally, promotes motor nerve regeneration. May be involved in intracellular vesicle traffic. The protein is Beta-taxilin (TXLNB) of Homo sapiens (Human).